The chain runs to 356 residues: Glutamine synthetase N-1 (356 aa).

Positions 19–99 constitute a GS beta-grasp domain; sequence VIAEYIWVGG…VMCDAYTPAG (81 aa). The GS catalytic domain maps to 106-356; the sequence is KRHNAAKIFS…IAETTLLWKP (251 aa).

This sequence belongs to the glutamine synthetase family. Homooctamer. In terms of tissue distribution, this is a nodule isozyme.

It is found in the cytoplasm. The catalysed reaction is L-glutamate + NH4(+) + ATP = L-glutamine + ADP + phosphate + H(+). The sequence is that of Glutamine synthetase N-1 (Gln-gamma) from Phaseolus vulgaris (Kidney bean).